The chain runs to 287 residues: Phosphatidylserine decarboxylase proenzyme (287 aa).

Residues D89, H146, and S252 each act as charge relay system; for autoendoproteolytic cleavage activity in the active site. Residue S252 is the Schiff-base intermediate with substrate; via pyruvic acid; for decarboxylase activity of the active site. Residue S252 is modified to Pyruvic acid (Ser); by autocatalysis.

It belongs to the phosphatidylserine decarboxylase family. PSD-B subfamily. Prokaryotic type I sub-subfamily. Heterodimer of a large membrane-associated beta subunit and a small pyruvoyl-containing alpha subunit. Pyruvate is required as a cofactor. In terms of processing, is synthesized initially as an inactive proenzyme. Formation of the active enzyme involves a self-maturation process in which the active site pyruvoyl group is generated from an internal serine residue via an autocatalytic post-translational modification. Two non-identical subunits are generated from the proenzyme in this reaction, and the pyruvate is formed at the N-terminus of the alpha chain, which is derived from the carboxyl end of the proenzyme. The autoendoproteolytic cleavage occurs by a canonical serine protease mechanism, in which the side chain hydroxyl group of the serine supplies its oxygen atom to form the C-terminus of the beta chain, while the remainder of the serine residue undergoes an oxidative deamination to produce ammonia and the pyruvoyl prosthetic group on the alpha chain. During this reaction, the Ser that is part of the protease active site of the proenzyme becomes the pyruvoyl prosthetic group, which constitutes an essential element of the active site of the mature decarboxylase.

It localises to the cell membrane. It catalyses the reaction a 1,2-diacyl-sn-glycero-3-phospho-L-serine + H(+) = a 1,2-diacyl-sn-glycero-3-phosphoethanolamine + CO2. It functions in the pathway phospholipid metabolism; phosphatidylethanolamine biosynthesis; phosphatidylethanolamine from CDP-diacylglycerol: step 2/2. In terms of biological role, catalyzes the formation of phosphatidylethanolamine (PtdEtn) from phosphatidylserine (PtdSer). The polypeptide is Phosphatidylserine decarboxylase proenzyme (Shewanella amazonensis (strain ATCC BAA-1098 / SB2B)).